The sequence spans 116 residues: Large ribosomal subunit protein bL17 (116 aa).

It belongs to the bacterial ribosomal protein bL17 family. As to quaternary structure, part of the 50S ribosomal subunit. Contacts protein L32.

The polypeptide is Large ribosomal subunit protein bL17 (Trichormus variabilis (strain ATCC 29413 / PCC 7937) (Anabaena variabilis)).